Here is a 156-residue protein sequence, read N- to C-terminus: MNLNATLFAQMVVFLVLAWFTMKFVWPPLINALDERSKKIADGLAAAEKGKAELDAAHKRVDQELAQARNDGQQRIADAEKRAQAVAEEIKSNAQAEAARIIAQAKAEAEQQIVKAREALRGEVATLAVKGAEQILKREVDQTAHAQLLNQLKAEL.

Residues 7 to 29 traverse the membrane as a helical segment; that stretch reads LFAQMVVFLVLAWFTMKFVWPPL.

Belongs to the ATPase B chain family. As to quaternary structure, F-type ATPases have 2 components, F(1) - the catalytic core - and F(0) - the membrane proton channel. F(1) has five subunits: alpha(3), beta(3), gamma(1), delta(1), epsilon(1). F(0) has three main subunits: a(1), b(2) and c(10-14). The alpha and beta chains form an alternating ring which encloses part of the gamma chain. F(1) is attached to F(0) by a central stalk formed by the gamma and epsilon chains, while a peripheral stalk is formed by the delta and b chains.

The protein resides in the cell inner membrane. Its function is as follows. F(1)F(0) ATP synthase produces ATP from ADP in the presence of a proton or sodium gradient. F-type ATPases consist of two structural domains, F(1) containing the extramembraneous catalytic core and F(0) containing the membrane proton channel, linked together by a central stalk and a peripheral stalk. During catalysis, ATP synthesis in the catalytic domain of F(1) is coupled via a rotary mechanism of the central stalk subunits to proton translocation. In terms of biological role, component of the F(0) channel, it forms part of the peripheral stalk, linking F(1) to F(0). This Burkholderia lata (strain ATCC 17760 / DSM 23089 / LMG 22485 / NCIMB 9086 / R18194 / 383) protein is ATP synthase subunit b.